Consider the following 186-residue polypeptide: Acireductone dioxygenase (186 aa).

The disordered stretch occupies residues 1–21 (MSRLSIFPDGSTSMDQSSPTP). Over residues 10–20 (GSTSMDQSSPT) the composition is skewed to polar residues. His103, His105, Glu109, and His147 together coordinate Fe(2+). 4 residues coordinate Ni(2+): His103, His105, Glu109, and His147.

The protein belongs to the acireductone dioxygenase (ARD) family. Monomer. Fe(2+) serves as cofactor. Requires Ni(2+) as cofactor.

It carries out the reaction 1,2-dihydroxy-5-(methylsulfanyl)pent-1-en-3-one + O2 = 3-(methylsulfanyl)propanoate + CO + formate + 2 H(+). It catalyses the reaction 1,2-dihydroxy-5-(methylsulfanyl)pent-1-en-3-one + O2 = 4-methylsulfanyl-2-oxobutanoate + formate + 2 H(+). It participates in amino-acid biosynthesis; L-methionine biosynthesis via salvage pathway; L-methionine from S-methyl-5-thio-alpha-D-ribose 1-phosphate: step 5/6. Catalyzes 2 different reactions between oxygen and the acireductone 1,2-dihydroxy-3-keto-5-methylthiopentene (DHK-MTPene) depending upon the metal bound in the active site. Fe-containing acireductone dioxygenase (Fe-ARD) produces formate and 2-keto-4-methylthiobutyrate (KMTB), the alpha-ketoacid precursor of methionine in the methionine recycle pathway. Ni-containing acireductone dioxygenase (Ni-ARD) produces methylthiopropionate, carbon monoxide and formate, and does not lie on the methionine recycle pathway. In Synechococcus sp. (strain CC9902), this protein is Acireductone dioxygenase.